Consider the following 454-residue polypeptide: UDP-glycosyltransferase 79A2 (454 aa).

Residues serine 269, 330 to 331 (WV), 348 to 356 (HAGYGSVIE), and 370 to 373 (KVDQ) each bind UDP-alpha-D-glucose.

The protein belongs to the UDP-glycosyltransferase family.

In terms of biological role, may glycosylate diterpenes or flavonols in leaves. In Stevia rebaudiana (Stevia), this protein is UDP-glycosyltransferase 79A2.